A 105-amino-acid chain; its full sequence is Large ribosomal subunit protein eL36 (105 aa).

Belongs to the eukaryotic ribosomal protein eL36 family. Component of the large ribosomal subunit.

The protein resides in the cytoplasm. Its subcellular location is the cytosol. Functionally, component of the large ribosomal subunit. The ribosome is a large ribonucleoprotein complex responsible for the synthesis of proteins in the cell. This is Large ribosomal subunit protein eL36 (rpl36) from Xenopus laevis (African clawed frog).